Reading from the N-terminus, the 234-residue chain is Triosephosphate isomerase (234 aa).

8 to 10 (NFK) is a substrate binding site. His90 acts as the Electrophile in catalysis. The Proton acceptor role is filled by Glu159. Positions 165 and 197 each coordinate substrate.

The protein belongs to the triosephosphate isomerase family. Homodimer.

It localises to the cytoplasm. It catalyses the reaction D-glyceraldehyde 3-phosphate = dihydroxyacetone phosphate. It participates in carbohydrate biosynthesis; gluconeogenesis. Its pathway is carbohydrate degradation; glycolysis; D-glyceraldehyde 3-phosphate from glycerone phosphate: step 1/1. In terms of biological role, involved in the gluconeogenesis. Catalyzes stereospecifically the conversion of dihydroxyacetone phosphate (DHAP) to D-glyceraldehyde-3-phosphate (G3P). This is Triosephosphate isomerase from Helicobacter pylori (strain J99 / ATCC 700824) (Campylobacter pylori J99).